The primary structure comprises 479 residues: Integrator complex subunit 12 (479 aa).

Residues 57–140 (SKVSLPKMTK…SPIAFQTKDI (84 aa)) are disordered. Low complexity predominate over residues 70–90 (KSSSSSSASSSITTTSSSKSS). The span at 91–128 (TSEKSKKESEKRTLEKIRVDPGEGVEPPKKPRLEKQDS) shows a compositional bias: basic and acidic residues. The PHD-type zinc finger occupies 161–217 (GLACVVCRQMTVTSGNQLVECQECHNLYHQECHKPQVTDKDVNDPRLVWYCARCTRQ). 3 disordered regions span residues 221 to 241 (MAQK…TTVP), 274 to 293 (TAAS…LPPG), and 305 to 479 (SNVG…KLKK). Low complexity-rich tracts occupy residues 223–239 (QKTQ…LATT) and 280–289 (SSSSSSSSSS). The span at 305–328 (SNVGPSSTKLSTSQSGNSKTSPAA) shows a compositional bias: polar residues. Residues 354-364 (SSAGSGNGNNG) are compositionally biased toward gly residues. The span at 399-411 (GSLSPGAAPSSSL) shows a compositional bias: low complexity. A compositionally biased stretch (gly residues) spans 412-428 (GGNGGSGGNGAGNGGNS). Over residues 429–451 (AGSSSSSGNNNNNGAKASADGKA) the composition is skewed to low complexity. The span at 466 to 479 (QMVKKKAAQKKLKK) shows a compositional bias: basic residues.

It belongs to the Integrator subunit 12 family. As to quaternary structure, component of the Integrator complex, composed of core subunits INTS1, INTS2, INTS3, INTS4, INTS5, INTS6, INTS7, INTS8, INTS9/RC74, INTS10, INTS11/CPSF3L, INTS12, INTS13, INTS14 and INTS15. The core complex associates with protein phosphatase 2A subunits PPP2CA and PPP2R1A, to form the Integrator-PP2A (INTAC) complex.

It is found in the nucleus. Its function is as follows. Component of the integrator complex, a multiprotein complex that terminates RNA polymerase II (Pol II) transcription in the promoter-proximal region of genes. The integrator complex provides a quality checkpoint during transcription elongation by driving premature transcription termination of transcripts that are unfavorably configured for transcriptional elongation: the complex terminates transcription by (1) catalyzing dephosphorylation of the C-terminal domain (CTD) of Pol II subunit POLR2A/RPB1 and SUPT5H/SPT5, (2) degrading the exiting nascent RNA transcript via endonuclease activity and (3) promoting the release of Pol II from bound DNA. The integrator complex is also involved in terminating the synthesis of non-coding Pol II transcripts, such as enhancer RNAs (eRNAs), small nuclear RNAs (snRNAs), telomerase RNAs and long non-coding RNAs (lncRNAs). This chain is Integrator complex subunit 12 (ints12), found in Danio rerio (Zebrafish).